The following is a 154-amino-acid chain: tRNA-splicing endonuclease (154 aa).

Catalysis depends on residues Tyr-86, His-102, and Lys-133.

This sequence belongs to the tRNA-intron endonuclease family. Archaeal short subfamily. As to quaternary structure, homotetramer; although the tetramer contains four active sites, only two participate in the cleavage. Therefore, it should be considered as a dimer of dimers.

The enzyme catalyses pretRNA = a 3'-half-tRNA molecule with a 5'-OH end + a 5'-half-tRNA molecule with a 2',3'-cyclic phosphate end + an intron with a 2',3'-cyclic phosphate and a 5'-hydroxyl terminus.. Endonuclease that removes tRNA introns. Cleaves pre-tRNA at the 5'- and 3'-splice sites to release the intron. The products are an intron and two tRNA half-molecules bearing 2',3' cyclic phosphate and 5'-OH termini. Recognizes a pseudosymmetric substrate in which 2 bulged loops of 3 bases are separated by a stem of 4 bp. The protein is tRNA-splicing endonuclease of Nanoarchaeum equitans (strain Kin4-M).